Here is a 555-residue protein sequence, read N- to C-terminus: MSMKCFQCQETVKNQGCTVKGVCGKPDNVANLQDVLIYTLKGISFYAHEGRNLGVKDEEVDRFVMDNLFATVTNVNFSEQDFIDRIKQSFKIRDQIKEQVMLKYREKYGENLDNKVPSNATWYTEDELNFKTKGEEVGVHSSDNEDINSLRELLTYGIKGIAAYAHHAYTLNQKDDEIFAFMHKGLAATTDDSLSVDDLVSLVMECGKFGVNTMALLDKANTEAYGHPEPTQINIGVRNNPGILISGHDLKDMQELLEQTEGTGVDVYTHGEMLPANAYPAFKKYDHFVGNYGNAWWQQNEEFEKFNGPILMTTNCLVPPKDSYKDRVYTTGVVGFDGVTHIPEREAGESKDFSQIIEHAKKCAAPEELEQGEIPGGFAHNAVLSVADKVVEAVKNGDIKRFVVMGGCDGRHKSREYYTEFAKALPQDTIILTAGCAKYRYNKLDLGDIGGIPRVLDAGQCNDSYSLVVIAQKLAEAFELEDINDLPVSYNIAWYEQKAVTVLLSLLYLGVKKIYLGPTLPAFVSENVLNVLVDKFDMRPNSNVDEDLEKIMAGE.

Residues Cys5, Cys8, Cys17, and Cys23 each coordinate [4Fe-4S] cluster. Positions 248, 272, 316, 408, 436, 461, 496, and 498 each coordinate hybrid [4Fe-2O-2S] cluster. Cys408 carries the cysteine persulfide modification.

This sequence belongs to the HCP family. Requires [4Fe-4S] cluster as cofactor. Hybrid [4Fe-2O-2S] cluster is required as a cofactor.

It localises to the cytoplasm. The enzyme catalyses A + NH4(+) + H2O = hydroxylamine + AH2 + H(+). Its function is as follows. Catalyzes the reduction of hydroxylamine to form NH(3) and H(2)O. The chain is Hydroxylamine reductase from Natranaerobius thermophilus (strain ATCC BAA-1301 / DSM 18059 / JW/NM-WN-LF).